Reading from the N-terminus, the 84-residue chain is U8-theraphotoxin-Hhn1f (84 aa).

The first 21 residues, 1–21, serve as a signal peptide directing secretion; it reads MKVVLLVCLVWMMAMMELVSC. 5 disulfide bridges follow: Cys23/Cys35, Cys29/Cys44, Cys34/Cys67, Cys54/Cys75, and Cys69/Cys81.

Belongs to the AVIT (prokineticin) family. Expressed by the venom gland.

The protein resides in the secreted. In Cyriopagopus hainanus (Chinese bird spider), this protein is U8-theraphotoxin-Hhn1f.